The following is a 187-amino-acid chain: Adenylate kinase (187 aa).

G10–T15 contacts ATP. Residues S30 to V59 are NMP. AMP contacts are provided by residues T31, R36, N57–V59, G85–R88, and Q92. The tract at residues G126–D136 is LID. Residue R127 coordinates ATP. AMP contacts are provided by R133 and R144. G172 is a binding site for ATP.

Belongs to the adenylate kinase family. In terms of assembly, monomer.

It localises to the cytoplasm. The catalysed reaction is AMP + ATP = 2 ADP. Its pathway is purine metabolism; AMP biosynthesis via salvage pathway; AMP from ADP: step 1/1. Catalyzes the reversible transfer of the terminal phosphate group between ATP and AMP. Plays an important role in cellular energy homeostasis and in adenine nucleotide metabolism. The protein is Adenylate kinase of Stenotrophomonas maltophilia (strain K279a).